The sequence spans 119 residues: Large ribosomal subunit protein uL18 (119 aa).

The protein belongs to the universal ribosomal protein uL18 family. Part of the 50S ribosomal subunit; part of the 5S rRNA/L5/L18/L25 subcomplex. Contacts the 5S and 23S rRNAs.

Its function is as follows. This is one of the proteins that bind and probably mediate the attachment of the 5S RNA into the large ribosomal subunit, where it forms part of the central protuberance. The chain is Large ribosomal subunit protein uL18 from Nitratidesulfovibrio vulgaris (strain DP4) (Desulfovibrio vulgaris).